The sequence spans 168 residues: tRNA-splicing endonuclease (168 aa).

Catalysis depends on residues Y107, H114, and K145.

This sequence belongs to the tRNA-intron endonuclease family. Archaeal short subfamily. Homotetramer; although the tetramer contains four active sites, only two participate in the cleavage. Therefore, it should be considered as a dimer of dimers.

The catalysed reaction is pretRNA = a 3'-half-tRNA molecule with a 5'-OH end + a 5'-half-tRNA molecule with a 2',3'-cyclic phosphate end + an intron with a 2',3'-cyclic phosphate and a 5'-hydroxyl terminus.. Functionally, endonuclease that removes tRNA introns. Cleaves pre-tRNA at the 5'- and 3'-splice sites to release the intron. The products are an intron and two tRNA half-molecules bearing 2',3' cyclic phosphate and 5'-OH termini. Recognizes a pseudosymmetric substrate in which 2 bulged loops of 3 bases are separated by a stem of 4 bp. In Thermococcus gammatolerans (strain DSM 15229 / JCM 11827 / EJ3), this protein is tRNA-splicing endonuclease.